We begin with the raw amino-acid sequence, 151 residues long: Mating pheromone 3 (151 aa).

An N-terminal signal peptide occupies residues 1-16 (MKAIFIILAILMVTQA). Residues 17-52 (FKMTSKVNTKLQSQIQSKFQSKNKLASTFQTSSQLK) constitute a propeptide that is removed on maturation.

It localises to the secreted. Its function is as follows. Mating ciliate pheromones (or gamones) are diffusible extracellular communication signals that distinguish different intraspecific classes of cells commonly referred to as 'mating types'. They prepare the latter for conjugation by changing their cell surface properties. This is Mating pheromone 3 (PHR3) from Euplotoides octocarinatus (Freshwater ciliate).